Here is a 229-residue protein sequence, read N- to C-terminus: Histidine biosynthesis bifunctional protein HisIE (229 aa).

Residues 1 to 127 are phosphoribosyl-AMP cyclohydrolase; it reads MNTLLDGIDW…APDTSALYGV (127 aa). The phosphoribosyl-ATP pyrophosphohydrolase stretch occupies residues 128-229; that stretch reads VDRLYHELLA…IAEKNSRKDS (102 aa).

The protein in the N-terminal section; belongs to the PRA-CH family. It in the C-terminal section; belongs to the PRA-PH family.

The protein resides in the cytoplasm. The enzyme catalyses 1-(5-phospho-beta-D-ribosyl)-ATP + H2O = 1-(5-phospho-beta-D-ribosyl)-5'-AMP + diphosphate + H(+). It carries out the reaction 1-(5-phospho-beta-D-ribosyl)-5'-AMP + H2O = 1-(5-phospho-beta-D-ribosyl)-5-[(5-phospho-beta-D-ribosylamino)methylideneamino]imidazole-4-carboxamide. It functions in the pathway amino-acid biosynthesis; L-histidine biosynthesis; L-histidine from 5-phospho-alpha-D-ribose 1-diphosphate: step 2/9. The protein operates within amino-acid biosynthesis; L-histidine biosynthesis; L-histidine from 5-phospho-alpha-D-ribose 1-diphosphate: step 3/9. In Wolinella succinogenes (strain ATCC 29543 / DSM 1740 / CCUG 13145 / JCM 31913 / LMG 7466 / NCTC 11488 / FDC 602W) (Vibrio succinogenes), this protein is Histidine biosynthesis bifunctional protein HisIE.